Consider the following 435-residue polypeptide: 5-methylthioadenosine/S-adenosylhomocysteine deaminase (435 aa).

Positions 65 and 67 each coordinate Zn(2+). E94, R150, and H189 together coordinate substrate. H216 contacts Zn(2+). E219 and D304 together coordinate substrate. Residue D304 participates in Zn(2+) binding.

Belongs to the metallo-dependent hydrolases superfamily. MTA/SAH deaminase family. Requires Zn(2+) as cofactor.

The catalysed reaction is S-adenosyl-L-homocysteine + H2O + H(+) = S-inosyl-L-homocysteine + NH4(+). It carries out the reaction S-methyl-5'-thioadenosine + H2O + H(+) = S-methyl-5'-thioinosine + NH4(+). Its function is as follows. Catalyzes the deamination of 5-methylthioadenosine and S-adenosyl-L-homocysteine into 5-methylthioinosine and S-inosyl-L-homocysteine, respectively. Is also able to deaminate adenosine. This chain is 5-methylthioadenosine/S-adenosylhomocysteine deaminase, found in Bacillus cereus (strain ATCC 14579 / DSM 31 / CCUG 7414 / JCM 2152 / NBRC 15305 / NCIMB 9373 / NCTC 2599 / NRRL B-3711).